The sequence spans 410 residues: Pectate lyase PEL9 (410 aa).

Positions 1 to 18 (MMGKSVWVFAALFPAVLA) are cleaved as a signal peptide. Residues Asp-191, Asp-215, Asp-216, and Asp-219 each contribute to the Ca(2+) site. A glycan (N-linked (GlcNAc...) asparagine) is linked at Asn-234. Lys-271 functions as the Proton acceptor in the catalytic mechanism. Polar residues predominate over residues 342–351 (GEAPTSLSDE). Disordered stretches follow at residues 342–361 (GEAPTSLSDEQISDGNSWDG) and 381–410 (ERNADGTIEPSGFLLPADGEEIGATTDWSA).

Belongs to the polysaccharide lyase 9 family. Ca(2+) serves as cofactor.

The protein localises to the secreted. The catalysed reaction is Eliminative cleavage of (1-&gt;4)-alpha-D-galacturonan to give oligosaccharides with 4-deoxy-alpha-D-galact-4-enuronosyl groups at their non-reducing ends.. Its activity is regulated as follows. Inhibited by iron ions. Activated in presence of the surfactant polysorbate 20, while inhibited in the presence of Triton X-100 and sodium dodecyl sulfate. Inhibited in presence of the organic solvents methanol, ethanol, propan-2-ol and acetone. Functionally, presents an endo-cleaving activity on the homogalacturonan (HG) region in pectin. Active on homogalacturonan with a degree of polymerization above 4, and does not appear to be affected by the degree of methylation of the substrate. Does not degrade linear rhamnogalacturonan. In Emericella nidulans (strain FGSC A4 / ATCC 38163 / CBS 112.46 / NRRL 194 / M139) (Aspergillus nidulans), this protein is Pectate lyase PEL9.